The sequence spans 363 residues: Histidinol-phosphate aminotransferase (363 aa).

K227 carries the N6-(pyridoxal phosphate)lysine modification.

Belongs to the class-II pyridoxal-phosphate-dependent aminotransferase family. Histidinol-phosphate aminotransferase subfamily. As to quaternary structure, homodimer. It depends on pyridoxal 5'-phosphate as a cofactor.

It catalyses the reaction L-histidinol phosphate + 2-oxoglutarate = 3-(imidazol-4-yl)-2-oxopropyl phosphate + L-glutamate. The protein operates within amino-acid biosynthesis; L-histidine biosynthesis; L-histidine from 5-phospho-alpha-D-ribose 1-diphosphate: step 7/9. The sequence is that of Histidinol-phosphate aminotransferase from Akkermansia muciniphila (strain ATCC BAA-835 / DSM 22959 / JCM 33894 / BCRC 81048 / CCUG 64013 / CIP 107961 / Muc).